Here is a 260-residue protein sequence, read N- to C-terminus: Snake venom serine protease Dav-X (260 aa).

The N-terminal stretch at 1–18 (MVLIRVLANLLILQLSYA) is a signal peptide. Residues 19–24 (QKSSEL) constitute a propeptide that is removed on maturation. The Peptidase S1 domain maps to 25-251 (VIGGVECDIN…YTDWIQNIIA (227 aa)). Intrachain disulfides connect Cys-31/Cys-165, Cys-52/Cys-68, Cys-102/Cys-258, Cys-144/Cys-212, Cys-176/Cys-191, and Cys-202/Cys-227. Residue His-67 is the Charge relay system of the active site. Asn-81 is a glycosylation site (N-linked (GlcNAc...) asparagine). The active-site Charge relay system is the Asp-112. N-linked (GlcNAc...) asparagine glycans are attached at residues Asn-124 and Asn-172. The active-site Charge relay system is the Ser-206. An N-linked (GlcNAc...) asparagine glycan is attached at Asn-241.

The protein belongs to the peptidase S1 family. Snake venom subfamily. Monomer. Expressed by the venom gland.

It is found in the secreted. Snake venom serine protease that may act in the hemostasis system of the prey. The polypeptide is Snake venom serine protease Dav-X (Deinagkistrodon acutus (Hundred-pace snake)).